The chain runs to 507 residues: Iroquois-class homeodomain protein IRX-3 (507 aa).

Residues 19–39 (RPGAAGGGGGGSSAGGRSGPG) form a disordered region. Gly residues predominate over residues 22 to 39 (AAGGGGGGSSAGGRSGPG). The homeobox; TALE-type DNA-binding region spans 130 to 192 (DPSRPKNATR…NARRRLKKEN (63 aa)). 2 disordered regions span residues 193-398 (KMTW…AAAA) and 416-468 (RPFP…SGTD). 2 stretches are compositionally biased toward acidic residues: residues 213–223 (REEEDEEEDEE) and 230–261 (EMEE…DLEN). Composition is skewed to pro residues over residues 314–342 (APPP…PAPA) and 418–428 (FPGPPAGPRPH). Phosphoserine occurs at positions 326 and 329. Low complexity predominate over residues 436 to 460 (APQHLLGLPGAAGHPAAAAAAYARP).

This sequence belongs to the TALE/IRO homeobox family. In terms of tissue distribution, expressed by neural progenitor cells in discrete domains of the ventral neural tube. Also expressed in specific and overlapping patterns with Irx1 and Irx2 in the developing and adult metanephric kidney. In the adult metanephros, renal expression is confined to the S3 segment of the proximal tubule, in the loop of Henle.

The protein localises to the nucleus. Functionally, transcription factor involved in SHH-dependent neural patterning. Together with NKX2-2 and NKX6-1 acts to restrict the generation of motor neurons to the appropriate region of the neural tube. Belongs to the class I proteins of neuronal progenitor factors, which are repressed by SHH signals. Involved in the transcriptional repression of MNX1 in non-motor neuron cells. Acts as a regulator of energy metabolism. This is Iroquois-class homeodomain protein IRX-3 (Irx3) from Mus musculus (Mouse).